Here is a 746-residue protein sequence, read N- to C-terminus: Ferrienterobactin receptor (746 aa).

The first 22 residues, 1–22 (MNKKIHSLALLVNLGIYGVAQA), serve as a signal peptide directing secretion. Residues 34–41 (DTIVVTAA) carry the TonB box motif. The region spanning 42-169 (EQNLQAPGVS…AGGVVNIITK (128 aa)) is the TBDR plug domain. The disordered stretch occupies residues 76–96 (GVNLTGNSTSGQRGNNRQIDI). A compositionally biased stretch (polar residues) spans 79-93 (LTGNSTSGQRGNNRQ). A TBDR beta-barrel domain is found at 174–746 (EWHGSWDAYF…TWYMSVNTHF (573 aa)). Positions 729 to 746 (YTYNEPGRTWYMSVNTHF) match the TonB C-terminal box motif.

It belongs to the TonB-dependent receptor family.

It is found in the cell outer membrane. Its function is as follows. This protein is involved in the initial step of iron uptake by binding ferrienterobactin (Fe-ENT), an iron chelatin siderophore that allows E.coli to extract iron from the environment. FepA also acts as a receptor for colicins B and D. The sequence is that of Ferrienterobactin receptor (fepA) from Escherichia coli (strain K12).